A 621-amino-acid chain; its full sequence is MEKTKDPADRSSRSERKRRDSFGMFDGYDSCSEDTSSSSSSDESEEEVAPLPSSLPIIKNNGQVYTYPDGKSGMATCEMCGMVGVRDAFYSKTKRFCSVSCSRSYSSNSKKASILARLQGKPPTKKAKVLQKKPLVAKLAAYAQYKATLKNQSVNKAPVTVEGFSWGNYITSNNVIAAPVTCFRHAPMGNCWGDIAEGVRIEVPNTDSNLPTKVFWISGIVKLAGYNALLRYEGFENDSSLDFWCNICGPDIHPVGWCATSGKPLVPPQSIQHKYTNWKAFLVKRLTGAKTLPPDFSQKVSENMQYPFKPSMRVEVVDKTHLCRTRVAVVESVIGGRLRLVYEESEDKTDDFWCHMYSPLIHPIGWSRSIGHRFKRTDILKKQESNYDAPSHLFIKVKDVEQGSEWFKEGMKLEAIDPLNLSAICVATIRKVLAEGYLMIGIDGSEAADGSDWFCYHASSPSIFPVGFCEINKIELTPPRGYTKLPFKWFDYLRETGSIAAPVKLFNKDVPNHGFRVGMKLEAVDLMEPRLVCVATVTRIIHRLLRIHFDGWEDEYDQWVDCESPDLYPVGWCQLTGYQLQPPAPQSNKDGQSNVSKQKKKSKSQPYKGHKKNFRKPGNRP.

The segment covering 1–21 (MEKTKDPADRSSRSERKRRDS) has biased composition (basic and acidic residues). The segment at 1 to 55 (MEKTKDPADRSSRSERKRRDSFGMFDGYDSCSEDTSSSSSSDESEEEVAPLPSSL) is disordered. Residues 29–41 (DSCSEDTSSSSSS) are compositionally biased toward low complexity. An FCS-type zinc finger spans residues 68–103 (PDGKSGMATCEMCGMVGVRDAFYSKTKRFCSVSCSR). 4 residues coordinate Zn(2+): Cys-77, Cys-80, Cys-97, and Cys-101. MBT repeat units lie at residues 164-268 (FSWG…LVPP), 276-373 (TNWK…IGHR), 374-479 (FKRT…LTPP), and 487-583 (FKWF…LQPP). Residues 581 to 621 (QPPAPQSNKDGQSNVSKQKKKSKSQPYKGHKKNFRKPGNRP) are disordered. The segment covering 597-621 (KQKKKSKSQPYKGHKKNFRKPGNRP) has biased composition (basic residues).

In terms of assembly, monomer. Component of the NuA4 histone acetyltransferase complex.

The protein resides in the nucleus. Its subcellular location is the chromosome. Its function is as follows. Chromatin reader component of the NuA4 histone acetyltransferase complex, a multiprotein complex involved in transcriptional activation of select genes principally by acetylation of nucleosomal histones H4 and H2A. The NuA4 complex plays a direct role in repair of DNA double-strand breaks (DSBs) by promoting homologous recombination (HR). MBTD1 specifically recognizes and binds monomethylated and dimethylated 'Lys-20' on histone H4 (H4K20me1 and H4K20me2, respectively). In the NuA4 complex, MBTD1 promotes recruitment of the complex to H4K20me marks by competing with TP53BP1 for binding to H4K20me. Following recruitment to H4K20me at DNA breaks, the NuA4 complex catalyzes acetylation of 'Lys-15' on histone H2A (H2AK15), blocking the ubiquitination mark required for TP53BP1 localization at DNA breaks, thereby promoting homologous recombination (HR). In Xenopus laevis (African clawed frog), this protein is MBT domain-containing protein 1.